A 708-amino-acid chain; its full sequence is Otogelin-like protein (708 aa).

The 113-residue stretch at 1-113 (KIIVNRLARK…SWEIEKSFEV (113 aa)) folds into the VWFD domain. An N-linked (GlcNAc...) asparagine glycan is attached at Asn553. Cystine bridges form between Cys616–Cys672, Cys637–Cys686, Cys648–Cys703, and Cys652–Cys705. Positions 616 to 708 (CKREERICQK…EPIDCTCQWN (93 aa)) constitute a CTCK domain.

This sequence belongs to the otogelin family.

The protein resides in the secreted. This chain is Otogelin-like protein (OTOGL), found in Pongo abelii (Sumatran orangutan).